The chain runs to 367 residues: ELAV-like protein 3 (367 aa).

RRM domains follow at residues 39–117 (TNLI…YARP), 125–205 (ANLY…FANN), and 284–362 (WCIF…FKTS).

Belongs to the RRM elav family. As to quaternary structure, interacts with MAP1B light chain LC1. As to expression, brain specific. Expressed in the hippocampus with expression in CA1, CA3 and dentate gyrus.

RNA-binding protein that binds to AU-rich element (ARE) sequences of target mRNAs, including VEGF mRNA. May also bind poly-A tracts via RRM 3. May be involved in neuronal differentiation and maintenance. Plays a role in the stabilization of GAP43 mRNA and in spatial learning. In Mus musculus (Mouse), this protein is ELAV-like protein 3 (Elavl3).